The sequence spans 144 residues: Phospholipase A2 (144 aa).

An N-terminal signal peptide occupies residues 1-15 (MKFLVLAALLTAGTA). Positions 16–22 (ASGVSPT) are cleaved as a propeptide — activation peptide. Cystine bridges form between Cys-33-Cys-99, Cys-49-Cys-144, Cys-51-Cys-67, Cys-66-Cys-127, Cys-73-Cys-120, Cys-83-Cys-113, and Cys-106-Cys-118. Residues Tyr-50, Gly-52, and Gly-54 each coordinate Ca(2+). His-70 is a catalytic residue. Residue Asp-71 participates in Ca(2+) binding. Asp-121 is an active-site residue.

The protein belongs to the phospholipase A2 family. As to quaternary structure, monomer or homodimer. It depends on Ca(2+) as a cofactor. In terms of processing, activated by trypsin cleavage in the duodenum. Can also be activated by thrombin or autocatalytically.

It is found in the secreted. It catalyses the reaction a 1,2-diacyl-sn-glycero-3-phosphocholine + H2O = a 1-acyl-sn-glycero-3-phosphocholine + a fatty acid + H(+). The catalysed reaction is 1,2-ditetradecanoyl-sn-glycero-3-phosphocholine + H2O = 1-tetradecanoyl-sn-glycero-3-phosphocholine + tetradecanoate + H(+). The enzyme catalyses 1,2-dihexadecanoyl-sn-glycero-3-phosphocholine + H2O = 1-hexadecanoyl-sn-glycero-3-phosphocholine + hexadecanoate + H(+). It carries out the reaction 1-hexadecanoyl-2-(9Z-octadecenoyl)-sn-glycero-3-phosphocholine + H2O = 1-hexadecanoyl-sn-glycero-3-phosphocholine + (9Z)-octadecenoate + H(+). It catalyses the reaction 1-hexadecanoyl-2-(5Z,8Z,11Z,14Z-eicosatetraenoyl)-sn-glycero-3-phosphocholine + H2O = 1-hexadecanoyl-sn-glycero-3-phosphocholine + (5Z,8Z,11Z,14Z)-eicosatetraenoate + H(+). The catalysed reaction is 1-hexadecanoyl-2-(9Z-octadecenoyl)-sn-glycero-3-phospho-(1'-sn-glycerol) + H2O = 1-hexadecanoyl-sn-glycero-3-phospho-(1'-sn-glycerol) + (9Z)-octadecenoate + H(+). The enzyme catalyses N-hexadecanoyl-1,2-di-(9Z-octadecenoyl)-sn-glycero-3-phosphoethanolamine + H2O = N-hexadecanoyl-1-(9Z-octadecenoyl)-sn-glycero-3-phosphoethanolamine + (9Z)-octadecenoate + H(+). It carries out the reaction 1-hexadecanoyl-2-(9Z,12Z-octadecadienoyl)-sn-glycero-3-phosphoethanolamine + H2O = 1-hexadecanoyl-sn-glycero-3-phosphoethanolamine + (9Z,12Z)-octadecadienoate + H(+). It catalyses the reaction N,1-dihexadecanoyl-2-(9Z,12Z-octadecadienoyl)-sn-glycero-3-phosphoethanolamine + H2O = N,1-dihexadecanoyl-sn-glycero-3-phosphoethanolamine + (9Z,12Z)-octadecadienoate + H(+). Functionally, secretory calcium-dependent phospholipase A2 that primarily targets dietary phospholipids in the intestinal tract. Hydrolyzes the ester bond of the fatty acyl group attached at sn-2 position of phospholipids (phospholipase A2 activity) with preference for phosphatidylethanolamines and phosphatidylglycerols over phosphatidylcholines. May play a role in the biosynthesis of N-acyl ethanolamines that regulate energy metabolism and inflammation in the intestinal tract. Hydrolyzes N-acyl phosphatidylethanolamines to N-acyl lysophosphatidylethanolamines, which are further cleaved by a lysophospholipase D to release N-acyl ethanolamines. May act in an autocrine and paracrine manner. Has anti-helminth activity in a process regulated by gut microbiota. Upon helminth infection of intestinal epithelia, directly affects phosphatidylethanolamine contents in the membrane of helminth larvae, likely controlling an array of phospholipid-mediated cellular processes such as membrane fusion and cell division while providing for better immune recognition, ultimately reducing larvae integrity and infectivity. This chain is Phospholipase A2 (PLA2G1B), found in Oryctolagus cuniculus (Rabbit).